Reading from the N-terminus, the 467-residue chain is Dimethylamine methyltransferase MtbB1 (467 aa).

Pyrrolysine 356 is a non-standard amino acid (pyrrolysine).

Belongs to the dimethylamine methyltransferase family. As to quaternary structure, may form homotetramers or homopentamers.

It catalyses the reaction Co(I)-[dimethylamine-specific corrinoid protein] + dimethylamine + H(+) = methyl-Co(III)-[dimethylamine-specific corrinoid protein] + methylamine. Its pathway is one-carbon metabolism; methanogenesis from dimethylamine. Catalyzes the transfer of a methyl group from dimethylamine to the corrinoid cofactor of MtbC. The major or perhaps only DMA methyltransferase expressed under inducing conditions. This chain is Dimethylamine methyltransferase MtbB1, found in Methanosarcina barkeri.